The sequence spans 61 residues: Small ribosomal subunit protein uS14 (61 aa).

Positions 24, 27, 40, and 43 each coordinate Zn(2+).

Belongs to the universal ribosomal protein uS14 family. Zinc-binding uS14 subfamily. Part of the 30S ribosomal subunit. Contacts proteins S3 and S10. Zn(2+) is required as a cofactor.

Its function is as follows. Binds 16S rRNA, required for the assembly of 30S particles and may also be responsible for determining the conformation of the 16S rRNA at the A site. The sequence is that of Small ribosomal subunit protein uS14 from Bifidobacterium adolescentis (strain ATCC 15703 / DSM 20083 / NCTC 11814 / E194a).